A 363-amino-acid polypeptide reads, in one-letter code: Chorismate synthase (363 aa).

Arg48 contributes to the NADP(+) binding site. Residues 125 to 127, 238 to 239, Gly278, 293 to 297, and Arg319 each bind FMN; these read RSS, NA, and KPTAS.

The protein belongs to the chorismate synthase family. In terms of assembly, homotetramer. FMNH2 is required as a cofactor.

The enzyme catalyses 5-O-(1-carboxyvinyl)-3-phosphoshikimate = chorismate + phosphate. It functions in the pathway metabolic intermediate biosynthesis; chorismate biosynthesis; chorismate from D-erythrose 4-phosphate and phosphoenolpyruvate: step 7/7. Functionally, catalyzes the anti-1,4-elimination of the C-3 phosphate and the C-6 proR hydrogen from 5-enolpyruvylshikimate-3-phosphate (EPSP) to yield chorismate, which is the branch point compound that serves as the starting substrate for the three terminal pathways of aromatic amino acid biosynthesis. This reaction introduces a second double bond into the aromatic ring system. The sequence is that of Chorismate synthase from Acinetobacter baumannii (strain AB0057).